Reading from the N-terminus, the 265-residue chain is Anaphase-promoting complex subunit 9 (265 aa).

The APC/C is composed of at least 13 subunits that stay tightly associated throughout the cell cycle: APC1, APC2, APC4, APC5, APC9, APC11, CDC16, CDC23, CDC26, CDC27, DOC1, MND2 and SWM1.

The protein resides in the cytoplasm. Its subcellular location is the nucleus. It functions in the pathway protein modification; protein ubiquitination. Component of the anaphase promoting complex/cyclosome (APC/C), a cell cycle-regulated E3 ubiquitin-protein ligase complex that controls progression through mitosis and the G1 phase of the cell cycle. The APC/C is thought to confer substrate specificity and, in the presence of ubiquitin-conjugating E2 enzymes, it catalyzes the formation of protein-ubiquitin conjugates that are subsequently degraded by the 26S proteasome. In early mitosis, the APC/C is activated by CDC20 and targets securin PDS1, the B-type cyclin CLB5, and other anaphase inhibitory proteins for proteolysis, thereby triggering the separation of sister chromatids at the metaphase-to-anaphase transition. In late mitosis and in G1, degradation of CLB5 allows activation of the APC/C by CDH1, which is needed to destroy CDC20 and the B-type cyclin CLB2 to allow exit from mitosis and creating the low CDK state necessary for cytokinesis and for reforming prereplicative complexes in G1 prior to another round of replication. This chain is Anaphase-promoting complex subunit 9 (APC9), found in Saccharomyces cerevisiae (strain ATCC 204508 / S288c) (Baker's yeast).